The sequence spans 92 residues: Small ribosomal subunit protein uS19 (92 aa).

It belongs to the universal ribosomal protein uS19 family.

Protein S19 forms a complex with S13 that binds strongly to the 16S ribosomal RNA. The polypeptide is Small ribosomal subunit protein uS19 (Bifidobacterium longum subsp. infantis (strain ATCC 15697 / DSM 20088 / JCM 1222 / NCTC 11817 / S12)).